The chain runs to 60 residues: Large ribosomal subunit protein uL30 (60 aa).

This sequence belongs to the universal ribosomal protein uL30 family. As to quaternary structure, part of the 50S ribosomal subunit.

The protein is Large ribosomal subunit protein uL30 of Albidiferax ferrireducens (strain ATCC BAA-621 / DSM 15236 / T118) (Rhodoferax ferrireducens).